Reading from the N-terminus, the 741-residue chain is Eukaryotic translation initiation factor 3 subunit B (741 aa).

Positions 1 to 10 (MAPSFDTLSE) are enriched in polar residues. Residues 1-22 (MAPSFDTLSEQDLHEEEEEEID) form a disordered region. Residues 13–22 (LHEEEEEEID) are compositionally biased toward acidic residues. Residues 40-126 (TFVVIDGLPV…HTLLVNKLMD (87 aa)) enclose the RRM domain. 5 WD repeats span residues 193-230 (AHWT…KQKQ), 232-289 (PHPF…RSFV), 303-344 (QPKK…LLGK), 514-557 (IEKK…EKPE), and 572-610 (LEHY…HTFS). Positions 695–722 (KDAYGLPEDVDDPKKAKDAPAVTSEQGE) are disordered.

The protein belongs to the eIF-3 subunit B family. As to quaternary structure, component of the eukaryotic translation initiation factor 3 (eIF-3) complex.

The protein resides in the cytoplasm. RNA-binding component of the eukaryotic translation initiation factor 3 (eIF-3) complex, which is involved in protein synthesis of a specialized repertoire of mRNAs and, together with other initiation factors, stimulates binding of mRNA and methionyl-tRNAi to the 40S ribosome. The eIF-3 complex specifically targets and initiates translation of a subset of mRNAs involved in cell proliferation. The chain is Eukaryotic translation initiation factor 3 subunit B (prt1) from Aspergillus clavatus (strain ATCC 1007 / CBS 513.65 / DSM 816 / NCTC 3887 / NRRL 1 / QM 1276 / 107).